Reading from the N-terminus, the 339-residue chain is NADH-quinone oxidoreductase subunit H (339 aa).

The next 8 helical transmembrane spans lie at Leu19–Ala39, Phe87–Phe107, Leu120–Ala140, Ser153–Met173, Phe191–Val211, Ile253–Phe273, Pro275–Phe295, and Leu310–Met330.

This sequence belongs to the complex I subunit 1 family. In terms of assembly, NDH-1 is composed of 14 different subunits. Subunits NuoA, H, J, K, L, M, N constitute the membrane sector of the complex.

The protein resides in the cell inner membrane. The catalysed reaction is a quinone + NADH + 5 H(+)(in) = a quinol + NAD(+) + 4 H(+)(out). In terms of biological role, NDH-1 shuttles electrons from NADH, via FMN and iron-sulfur (Fe-S) centers, to quinones in the respiratory chain. The immediate electron acceptor for the enzyme in this species is believed to be ubiquinone. Couples the redox reaction to proton translocation (for every two electrons transferred, four hydrogen ions are translocated across the cytoplasmic membrane), and thus conserves the redox energy in a proton gradient. This subunit may bind ubiquinone. This chain is NADH-quinone oxidoreductase subunit H, found in Methylobacillus flagellatus (strain ATCC 51484 / DSM 6875 / VKM B-1610 / KT).